A 446-amino-acid chain; its full sequence is Methionine aminopeptidase 2 (446 aa).

A disordered region spans residues 1 to 85; it reads MAGVTEGEDT…KNKKKKKKKI (85 aa). Residues 8 to 32 are compositionally biased toward basic and acidic residues; the sequence is EDTKVIESKINELNIDKPKLEDNNE. Acidic residues predominate over residues 42 to 58; sequence SGDDDDDDKEEDDDNEI. Over residues 73–85 the composition is skewed to basic residues; the sequence is KKNKNKKKKKKKI. Histidine 197 is a substrate binding site. 3 residues coordinate a divalent metal cation: aspartate 217, aspartate 228, and histidine 299. Histidine 307 contributes to the substrate binding site. Residues glutamate 332 and glutamate 427 each coordinate a divalent metal cation.

This sequence belongs to the peptidase M24A family. Methionine aminopeptidase eukaryotic type 2 subfamily. Requires Co(2+) as cofactor. It depends on Zn(2+) as a cofactor. Mn(2+) serves as cofactor. Fe(2+) is required as a cofactor.

The protein resides in the cytoplasm. The enzyme catalyses Release of N-terminal amino acids, preferentially methionine, from peptides and arylamides.. In terms of biological role, cotranslationally removes the N-terminal methionine from nascent proteins. The N-terminal methionine is often cleaved when the second residue in the primary sequence is small and uncharged (Met-Ala-, Cys, Gly, Pro, Ser, Thr, or Val). This is Methionine aminopeptidase 2 from Candida albicans (strain SC5314 / ATCC MYA-2876) (Yeast).